Consider the following 460-residue polypeptide: Bifunctional protein GlmU (460 aa).

The tract at residues 1–229 (MTNYAIILAA…FNESLGVNDR (229 aa)) is pyrophosphorylase. UDP-N-acetyl-alpha-D-glucosamine is bound by residues 8–11 (LAAG), K22, Q72, and 77–78 (GT). Residue D102 coordinates Mg(2+). The UDP-N-acetyl-alpha-D-glucosamine site is built by G139, E154, N169, and N227. Residue N227 participates in Mg(2+) binding. Residues 230–250 (VALATAETVMRQRITQKHMVN) form a linker region. The N-acetyltransferase stretch occupies residues 251–460 (GVTFHNPETV…RLAHHPSRSK (210 aa)). 2 residues coordinate UDP-N-acetyl-alpha-D-glucosamine: R332 and K350. H362 serves as the catalytic Proton acceptor. Positions 365 and 376 each coordinate UDP-N-acetyl-alpha-D-glucosamine. Acetyl-CoA contacts are provided by residues A379, 385–386 (NY), S404, A422, and R439.

The protein in the N-terminal section; belongs to the N-acetylglucosamine-1-phosphate uridyltransferase family. This sequence in the C-terminal section; belongs to the transferase hexapeptide repeat family. As to quaternary structure, homotrimer. Requires Mg(2+) as cofactor.

The protein resides in the cytoplasm. The enzyme catalyses alpha-D-glucosamine 1-phosphate + acetyl-CoA = N-acetyl-alpha-D-glucosamine 1-phosphate + CoA + H(+). The catalysed reaction is N-acetyl-alpha-D-glucosamine 1-phosphate + UTP + H(+) = UDP-N-acetyl-alpha-D-glucosamine + diphosphate. The protein operates within nucleotide-sugar biosynthesis; UDP-N-acetyl-alpha-D-glucosamine biosynthesis; N-acetyl-alpha-D-glucosamine 1-phosphate from alpha-D-glucosamine 6-phosphate (route II): step 2/2. It functions in the pathway nucleotide-sugar biosynthesis; UDP-N-acetyl-alpha-D-glucosamine biosynthesis; UDP-N-acetyl-alpha-D-glucosamine from N-acetyl-alpha-D-glucosamine 1-phosphate: step 1/1. Its pathway is bacterial outer membrane biogenesis; LPS lipid A biosynthesis. In terms of biological role, catalyzes the last two sequential reactions in the de novo biosynthetic pathway for UDP-N-acetylglucosamine (UDP-GlcNAc). The C-terminal domain catalyzes the transfer of acetyl group from acetyl coenzyme A to glucosamine-1-phosphate (GlcN-1-P) to produce N-acetylglucosamine-1-phosphate (GlcNAc-1-P), which is converted into UDP-GlcNAc by the transfer of uridine 5-monophosphate (from uridine 5-triphosphate), a reaction catalyzed by the N-terminal domain. The sequence is that of Bifunctional protein GlmU from Streptococcus pyogenes serotype M3 (strain ATCC BAA-595 / MGAS315).